A 121-amino-acid chain; its full sequence is Small ribosomal subunit protein uS13 (121 aa).

Residues 91–121 (HRRGLPVRGQNTKNNARTRKGPSKTVAGKKK) are disordered. Residues 106 to 121 (ARTRKGPSKTVAGKKK) show a composition bias toward basic residues.

The protein belongs to the universal ribosomal protein uS13 family. As to quaternary structure, part of the 30S ribosomal subunit. Forms a loose heterodimer with protein S19. Forms two bridges to the 50S subunit in the 70S ribosome.

Located at the top of the head of the 30S subunit, it contacts several helices of the 16S rRNA. In the 70S ribosome it contacts the 23S rRNA (bridge B1a) and protein L5 of the 50S subunit (bridge B1b), connecting the 2 subunits; these bridges are implicated in subunit movement. Contacts the tRNAs in the A and P-sites. This Listeria welshimeri serovar 6b (strain ATCC 35897 / DSM 20650 / CCUG 15529 / CIP 8149 / NCTC 11857 / SLCC 5334 / V8) protein is Small ribosomal subunit protein uS13.